Consider the following 260-residue polypeptide: MIIVLSPAKSLDYETPPHVSHHTQPQFADDAAALIDELRRLSPQQIATLMSISDPLARLNFQRYADWSRASTPANAKQAVLAFNGDVYEGLDARSLSPDDLDYAQRHVRVLSGLYGLLRPLDLLQPYRLEMGTRFSNARGKDLYAFWGERITHALNAELKTRVGASRVLVNCASAEYFKSVKPKLLDARVVTPVFEDWKDGRYKIISFHAKRARGLMARYVVEGRIDSPDALKDFASEGYAFDASASNDDTYVFRRRAGA.

It belongs to the UPF0246 family.

The sequence is that of UPF0246 protein BPSL1241 from Burkholderia pseudomallei (strain K96243).